A 1018-amino-acid polypeptide reads, in one-letter code: 2-oxoglutarate dehydrogenase-like, mitochondrial (1018 aa).

Ca(2+) is bound by residues H138, D151, and D153. Thiamine diphosphate-binding residues include R307, D406, N439, I441, and Q671. Positions 406, 439, and 441 each coordinate Mg(2+).

It belongs to the alpha-ketoglutarate dehydrogenase family. In terms of assembly, the OGDHC complex comprises multiple copies of three catalytic enzyme components, the 2-oxoglutarate dehydrogenase (OGDH/E1), the dihydrolipoamide dehydrogenase (DLST/E2) and the dihydrolipoamide dehydrogenase (DLD/E3). OGDHL/E1-like isoenzyme may replace OGDH in the OGDHC complex in the brain. It depends on thiamine diphosphate as a cofactor. Mg(2+) is required as a cofactor.

It is found in the mitochondrion matrix. It carries out the reaction N(6)-[(R)-lipoyl]-L-lysyl-[protein] + 2-oxoglutarate + H(+) = N(6)-[(R)-S(8)-succinyldihydrolipoyl]-L-lysyl-[protein] + CO2. 2-oxoglutarate dehydrogenase (E1-like) component of the 2-oxoglutarate dehydrogenase multienzyme complex (OGDHC) which mediates the decarboxylation of alpha-ketoglutarate in the tricarboxylic acid cycle. The OGDHC complex catalyzes the overall conversion of 2-oxoglutarate to succinyl-CoA and CO(2) while reducing NAD(+) to NADH. The OGDHC complex is mainly active in the mitochondrion. Involved in the inhibition of cell proliferation and in apoptosis. This is 2-oxoglutarate dehydrogenase-like, mitochondrial (ogdhl) from Xenopus laevis (African clawed frog).